We begin with the raw amino-acid sequence, 250 residues long: Ubiquinone/menaquinone biosynthesis C-methyltransferase UbiE (250 aa).

S-adenosyl-L-methionine is bound by residues T73, D94, N122–A123, and S139.

It belongs to the class I-like SAM-binding methyltransferase superfamily. MenG/UbiE family.

The catalysed reaction is a 2-demethylmenaquinol + S-adenosyl-L-methionine = a menaquinol + S-adenosyl-L-homocysteine + H(+). It catalyses the reaction a 2-methoxy-6-(all-trans-polyprenyl)benzene-1,4-diol + S-adenosyl-L-methionine = a 5-methoxy-2-methyl-3-(all-trans-polyprenyl)benzene-1,4-diol + S-adenosyl-L-homocysteine + H(+). The protein operates within quinol/quinone metabolism; menaquinone biosynthesis; menaquinol from 1,4-dihydroxy-2-naphthoate: step 2/2. It participates in cofactor biosynthesis; ubiquinone biosynthesis. In terms of biological role, methyltransferase required for the conversion of demethylmenaquinol (DMKH2) to menaquinol (MKH2) and the conversion of 2-polyprenyl-6-methoxy-1,4-benzoquinol (DDMQH2) to 2-polyprenyl-3-methyl-6-methoxy-1,4-benzoquinol (DMQH2). In Francisella tularensis subsp. novicida (strain U112), this protein is Ubiquinone/menaquinone biosynthesis C-methyltransferase UbiE.